We begin with the raw amino-acid sequence, 145 residues long: Basic phospholipase A2 S11-61 (145 aa).

The signal sequence occupies residues M1–A19. A propeptide spanning residues S20 to L27 is cleaved from the precursor. Disulfide bonds link C38/C98, C54/C144, C56/C72, C71/C125, C78/C118, C87/C111, and C105/C116. Ca(2+) is bound by residues Y55, G57, and G59. H75 is a catalytic residue. Residue D76 participates in Ca(2+) binding. D119 is a catalytic residue.

It belongs to the phospholipase A2 family. Group I subfamily. D49 sub-subfamily. The cofactor is Ca(2+). In terms of tissue distribution, expressed by the venom gland.

The protein localises to the secreted. The enzyme catalyses a 1,2-diacyl-sn-glycero-3-phosphocholine + H2O = a 1-acyl-sn-glycero-3-phosphocholine + a fatty acid + H(+). In terms of biological role, snake venom phospholipase A2 (PLA2) that inhibits collagen-induced platelet aggregation. PLA2 catalyzes the calcium-dependent hydrolysis of the 2-acyl groups in 3-sn-phosphoglycerides. In Austrelaps superbus (Lowland copperhead snake), this protein is Basic phospholipase A2 S11-61.